Consider the following 436-residue polypeptide: MVLPTVAIVGRPNVGKSTLFNRIAGERISIVEDVEGVTRDRIYATGEWLNRQFSLIDTGGIDDVDAPFMEQIKHQAQIAMEEADVIVFVVSGKEGVTDADEYVSKILYRTNTPVILAVNKVDNPEMRNDIYDFYSLGLGDPYPVSSVHGIGTGDVLDAIVENLPVEEAEENDDIIRFSLIGRPNVGKSSLINAILGEDRVIASPVAGTTRDAIDTHFTDADGQEFTMIDTAGMRKSGKIYENTEKYSVMRAMRAIDRSDVVLMVINAEEGIREYDKRIAGFAHEAGKGMIIVVNKWDTIDKDNHTVAKWEADIRDQFQFLTYAPIIFVSALTKQRLNKLPDLIKRISESQNKRIPSAVLNDVIMDAIAINPTPTDKGKRLKIFYATQVSVKPPTFVVFVNEEELMHFSYLRFLENQIRAAFTFEGTPIHLIARKRK.

2 consecutive EngA-type G domains span residues 4–167 (PTVA…PVEE) and 175–351 (IRFS…ESQN). Residues 10 to 17 (GRPNVGKS), 57 to 61 (DTGGI), 119 to 122 (NKVD), 181 to 188 (GRPNVGKS), 229 to 233 (DTAGM), and 294 to 297 (NKWD) each bind GTP. Residues 352 to 436 (KRIPSAVLND…PIHLIARKRK (85 aa)) enclose the KH-like domain.

It belongs to the TRAFAC class TrmE-Era-EngA-EngB-Septin-like GTPase superfamily. EngA (Der) GTPase family. As to quaternary structure, associates with the 50S ribosomal subunit.

Its function is as follows. GTPase that plays an essential role in the late steps of ribosome biogenesis. The chain is GTPase Der from Streptococcus pyogenes serotype M1.